Consider the following 523-residue polypeptide: NADH-ubiquinone oxidoreductase chain 4 (523 aa).

14 helical membrane-spanning segments follow: residues 22-42 (FFIMSYIEMVLAIPLLGAIAL), 62-82 (LLTFLISLLLWIEFDSSSALF), 120-140 (ISLFFIILTTLLVPICILVSW), 149-169 (EYCIAFLVLETLMLTVFSVLD), 170-190 (LLLFYIFFESVLIPMFIIIGV), 204-224 (FFLYTLFGSVLMLLAILLIYF), 246-266 (ILWLAFFASFAVKVPMVPVHI), 276-296 (PTAGSVILAGILLKLGTYGFL), 303-323 (FPYACIYFTPLIYTMSVIAIV), 338-358 (IIAYSSVAHMNFVTIGLFSQN), 366-386 (ILLMISHGLVSPALFLCVGVL), 404-424 (TMPIFALLFVFFTMANISLPG), 444-464 (FVAFCAATGMVLGAAYALWLC), and 488-508 (FFMFAPLIAGILWIGVYPEPF).

This sequence belongs to the complex I subunit 4 family.

It localises to the mitochondrion membrane. It catalyses the reaction a ubiquinone + NADH + 5 H(+)(in) = a ubiquinol + NAD(+) + 4 H(+)(out). Core subunit of the mitochondrial membrane respiratory chain NADH dehydrogenase (Complex I) that is believed to belong to the minimal assembly required for catalysis. Complex I functions in the transfer of electrons from NADH to the respiratory chain. The immediate electron acceptor for the enzyme is believed to be ubiquinone. This Prototheca wickerhamii protein is NADH-ubiquinone oxidoreductase chain 4 (ND4).